Consider the following 344-residue polypeptide: MKFLDLAKVYIRSGSGGNGCVSFRREKFIEYGGPDGGDGGKGGSVWAEAVDGLNTLIDFRYQQHFFAQNGVPGKGQQRSGKDGEDIVLRVPVGTEILDEDEETVLADLTEVGQRVLLAKGGNGGFGNLHFKSATNQAPRRANPGQAGVDRTIWLRLKLIADVGLLGLPNAGKSTFLAATSNARPKIADYPFTTLHPNLGVVGVDNVEFVIADIPGLIAGAHEGRGIGDRFLGHVERCAVLLHLVDGTSGDLVEDYHTIIGELEAYGGDLAGKPRVTVLNKIDTLDDEERAFLVEELETASGGPVMMMSGASREGVTEVLRALRARIDANRLREKPVEESQPWQP.

The region spanning 1 to 159 is the Obg domain; sequence MKFLDLAKVY…RTIWLRLKLI (159 aa). The region spanning 160–327 is the OBG-type G domain; the sequence is ADVGLLGLPN…VLRALRARID (168 aa). Residues 166–173, 191–195, 212–215, 279–282, and 308–310 contribute to the GTP site; these read GLPNAGKS, FTTLH, DIPG, NKID, and SGA. 2 residues coordinate Mg(2+): Ser173 and Thr193.

Belongs to the TRAFAC class OBG-HflX-like GTPase superfamily. OBG GTPase family. Monomer. It depends on Mg(2+) as a cofactor.

The protein resides in the cytoplasm. Its function is as follows. An essential GTPase which binds GTP, GDP and possibly (p)ppGpp with moderate affinity, with high nucleotide exchange rates and a fairly low GTP hydrolysis rate. Plays a role in control of the cell cycle, stress response, ribosome biogenesis and in those bacteria that undergo differentiation, in morphogenesis control. In Ruegeria pomeroyi (strain ATCC 700808 / DSM 15171 / DSS-3) (Silicibacter pomeroyi), this protein is GTPase Obg.